The following is a 482-amino-acid chain: CBL-interacting serine/threonine-protein kinase 23 (482 aa).

Low complexity predominate over residues methionine 1–arginine 25. The interval methionine 1 to glycine 29 is disordered. A Protein kinase domain is found at tyrosine 31 to phenylalanine 286. Residues leucine 37 to valine 45 and lysine 60 each bind ATP. Aspartate 154 acts as the Proton acceptor in catalysis. Residues aspartate 172–glutamate 201 form an activation loop region. At serine 176 the chain carries Phosphoserine. Threonine 190 is subject to Phosphothreonine. Positions lysine 328–glutamate 352 constitute an NAF domain. The interval lysine 359–valine 388 is PPI. The segment at lysine 459 to threonine 482 is disordered.

Belongs to the protein kinase superfamily. CAMK Ser/Thr protein kinase family. SNF1 subfamily. As to quaternary structure, part of a K(+)-channel calcium-sensing kinase/phosphatase complex composed by a calcium sensor CBL (CBL1, CBL2, CBL3 or CBL9), a kinase CIPK (CIPK6, CIPK16 or CIPK23), a phosphatase PP2C (AIP1) and a K(+)-channel (AKT1). Interacts with AKT1, CBL1, CBL2, CBL3, CBL5, CBL8, CBL9 and NRT1.1. The cofactor is Mn(2+). In terms of processing, autophosphorylated. In seedlings, mostly in vascular bundles, and in roots, especially in cortex and endodermis cells. In adult plants, mostly expressed in flowers, and, to a lower extent, in roots, leaves, stems and siliques, particularly in vascular tissues. Also detected in guard cells and root hairs.

It is found in the cell membrane. It carries out the reaction L-seryl-[protein] + ATP = O-phospho-L-seryl-[protein] + ADP + H(+). The catalysed reaction is L-threonyl-[protein] + ATP = O-phospho-L-threonyl-[protein] + ADP + H(+). Functionally, CIPK serine-threonine protein kinases interact with CBL proteins. Binding of a CBL protein to the regulatory NAF domain of CIPK protein leads to activation of the kinase in a calcium-dependent manner. Downstream of CBL1, CBL2, CBL3 and CBL9, regulates by phosphorylation the K(+) conductance and uptake of AKT1 in low K(+) condition, in response to calcium signaling and during the stomatal opening regulation by monitoring the turgor pressure in guard cells. In response to low nitrate concentration, phosphorylates NRT1.1, switching it from a low-affinity nitrate transporter to a high-affinity transporter. Confers tolerance to low potassium conditions. Involved in drought sensitivity and leaf transpiration. The polypeptide is CBL-interacting serine/threonine-protein kinase 23 (CIPK23) (Arabidopsis thaliana (Mouse-ear cress)).